The sequence spans 335 residues: UPF0353 protein MLBr01808 (335 aa).

2 consecutive transmembrane segments (helical) span residues 18 to 38 and 67 to 87; these read WFFL…MMQV and VPAI…AGPT. Residues 98–294 form the VWFA domain; the sequence is VVMLVIDVSQ…AELKAVYASL (197 aa). Residues 309-329 traverse the membrane as a helical segment; that stretch reads AGWLRLGVLVLALAALTALLI.

The protein belongs to the UPF0353 family.

It localises to the cell membrane. The chain is UPF0353 protein MLBr01808 from Mycobacterium leprae (strain Br4923).